A 148-amino-acid polypeptide reads, in one-letter code: FAD synthase (148 aa).

ATP is bound by residues 14-15 (VF), 19-22 (HAGH), and Asp-100.

This sequence belongs to the archaeal FAD synthase family. As to quaternary structure, homodimer. The cofactor is a divalent metal cation.

It carries out the reaction FMN + ATP + H(+) = FAD + diphosphate. It participates in cofactor biosynthesis; FAD biosynthesis; FAD from FMN: step 1/1. Functionally, catalyzes the transfer of the AMP portion of ATP to flavin mononucleotide (FMN) to produce flavin adenine dinucleotide (FAD) coenzyme. This Pyrococcus horikoshii (strain ATCC 700860 / DSM 12428 / JCM 9974 / NBRC 100139 / OT-3) protein is FAD synthase.